Consider the following 247-residue polypeptide: Mitochondrial intermembrane space import and assembly protein 40 (247 aa).

The transit peptide at 1–28 (MLSSKLVACSAGRSVQRISRTFLPAMRG) directs the protein to the mitochondrion. Topologically, residues 29 to 45 (VATKAAAGPSRQSALSS) are mitochondrial matrix. Residues 46-63 (YSIAAVTAIGVGASFYAL) traverse the membrane as a helical; Signal-anchor for type II membrane protein segment. The Mitochondrial intermembrane portion of the chain corresponds to 64 to 247 (QSRSSAIQCE…SSGGKEGASA (184 aa)). The segment covering 81 to 96 (RLKPKEAKGDATLHKD) has biased composition (basic and acidic residues). Residues 81-114 (RLKPKEAKGDATLHKDAHTRHAPAEVQDERVEPV) form a disordered region. 3 disulfide bridges follow: Cys-149/Cys-151, Cys-160/Cys-193, and Cys-170/Cys-183. Positions 157-201 (HGPCGEQFKLAFSCFVYSEAEPKGIDCVDKFKAMQDCFREHPDVY) constitute a CHCH domain. Short sequence motifs (cx9C motif) lie at residues 160-170 (CGEQFKLAFSC) and 183-193 (CVDKFKAMQDC). The tract at residues 217–247 (KEEANAKSNGLNDAAQEAVEESSGGKEGASA) is disordered.

Monomer. Cu(2+) is required as a cofactor. The cofactor is Zn(2+).

The protein resides in the mitochondrion inner membrane. Functionally, required for the import and folding of small cysteine-containing proteins (small Tim) in the mitochondrial intermembrane space (IMS). Forms a redox cycle with ERV1 that involves a disulfide relay system. Precursor proteins to be imported into the IMS are translocated in their reduced form into the mitochondria. The oxidized form of MIA40 forms a transient intermolecular disulfide bridge with the reduced precursor protein, resulting in oxidation of the precursor protein that now contains an intramolecular disulfide bond and is able to undergo folding in the IMS. This Mycosarcoma maydis (Corn smut fungus) protein is Mitochondrial intermembrane space import and assembly protein 40 (MIA40).